The following is a 160-amino-acid chain: Transmembrane protein 216 (160 aa).

4 consecutive transmembrane segments (helical) span residues 41-61, 68-88, 101-121, and 134-154; these read WYFAAFFVAEILMFIYKGVIL, LILDVVLLLLFSGLETLRLFY, LFVSVAILVPCAVLSVYYLLL, and AVLLCFYGFELVLGVMTISIF.

Part of the tectonic-like complex (also named B9 complex).

The protein resides in the membrane. The protein localises to the cytoplasm. It is found in the cytoskeleton. It localises to the cilium basal body. Part of the tectonic-like complex which is required for tissue-specific ciliogenesis and may regulate ciliary membrane composition. The sequence is that of Transmembrane protein 216 (tmem216) from Danio rerio (Zebrafish).